The following is a 681-amino-acid chain: Macrolide export ATP-binding/permease protein MacB (681 aa).

An ABC transporter domain is found at 6–244 (LKLAAVTRRF…FAEVGVGAAA (239 aa)). 42 to 49 (GASGSGKS) contributes to the ATP binding site. Residues 246–274 (TETAADTRSAPASGDAPPPANNDTAADPA) form a disordered region. 4 helical membrane passes run 306 to 326 (LLTM…VAVG), 554 to 574 (LTLL…IGVM), 611 to 631 (LVCL…GALF), and 644 to 664 (AGAI…FGFM).

This sequence belongs to the ABC transporter superfamily. Macrolide exporter (TC 3.A.1.122) family. In terms of assembly, homodimer.

The protein resides in the cell inner membrane. In terms of biological role, non-canonical ABC transporter that contains transmembrane domains (TMD), which form a pore in the inner membrane, and an ATP-binding domain (NBD), which is responsible for energy generation. Confers resistance against macrolides. In Burkholderia cenocepacia (strain HI2424), this protein is Macrolide export ATP-binding/permease protein MacB.